We begin with the raw amino-acid sequence, 122 residues long: UPF0102 protein NGR_c36770 (122 aa).

Belongs to the UPF0102 family.

This chain is UPF0102 protein NGR_c36770, found in Sinorhizobium fredii (strain NBRC 101917 / NGR234).